The following is a 130-amino-acid chain: Small ribosomal subunit protein uS9 (130 aa).

Belongs to the universal ribosomal protein uS9 family.

The polypeptide is Small ribosomal subunit protein uS9 (Geotalea uraniireducens (strain Rf4) (Geobacter uraniireducens)).